A 185-amino-acid chain; its full sequence is Shikimate kinase (185 aa).

21–26 (GVGKTT) lines the ATP pocket. Thr25 contacts Mg(2+). The substrate site is built by Asp43, Arg67, and Gly90. Arg129 lines the ATP pocket. Arg147 serves as a coordination point for substrate.

It belongs to the shikimate kinase family. Monomer. Mg(2+) is required as a cofactor.

Its subcellular location is the cytoplasm. The enzyme catalyses shikimate + ATP = 3-phosphoshikimate + ADP + H(+). Its pathway is metabolic intermediate biosynthesis; chorismate biosynthesis; chorismate from D-erythrose 4-phosphate and phosphoenolpyruvate: step 5/7. In terms of biological role, catalyzes the specific phosphorylation of the 3-hydroxyl group of shikimic acid using ATP as a cosubstrate. The polypeptide is Shikimate kinase (Bacillus pumilus (strain SAFR-032)).